The primary structure comprises 277 residues: MSSCSRVALVTGANKGIGFAITRDLCRKFSGDVVLTARDEARGRAAVQQLQAEGLSPRFHQLDIDDPQSIRALRDFLRKEYGGLNVLVNNAGIAFRMDDPTPFDIQAEVTLKTNFFATRNVCTELLPIMKPHGRVVNISSLQGLKALENCREDLQEKFRCDTLTEVDLVDLMKKFVEDTKNEVHEREGWPDSAYGVSKLGVTVLTRILARQLDEKRKADRILLNACCPGWVKTDMARDQGSRTVEEGAETPVYLALLPPDATEPHGQLVRDKVVQTW.

At serine 2 the chain carries N-acetylserine. NADP(+)-binding positions include 10–34 (VTGA…GDVV), 38–42 (RDEAR), 63–64 (DI), and asparagine 90. Serine 30 bears the Phosphoserine mark. Serine 140 contributes to the substrate binding site. Tyrosine 194 functions as the Proton acceptor in the catalytic mechanism. Residue 194–198 (YGVSK) participates in NADP(+) binding.

This sequence belongs to the short-chain dehydrogenases/reductases (SDR) family.

Its subcellular location is the cytoplasm. It carries out the reaction a secondary alcohol + NADP(+) = a ketone + NADPH + H(+). The enzyme catalyses a quinone + NADPH + H(+) = a quinol + NADP(+). In terms of biological role, catalyzes the NADPH-dependent reduction of carbonyl compounds to their corresponding alcohols. Has low NADPH-dependent oxidoreductase activity. Acts on several orthoquinones, as well as on non-quinone compounds, such as isatin or on the anticancer drug oracin. Best substrates for CBR3 is 1,2- naphthoquinone, hence could play a role in protection against cytotoxicity of exogenous quinones. Exerts activity toward ortho-quinones but not paraquinones. No endogenous substrate for CBR3 except isatin has been identified. This is Carbonyl reductase [NADPH] 3 (Cbr3) from Mus musculus (Mouse).